The chain runs to 329 residues: MELLEYLKRDEVLFLCHHNADPDAVGSCVALKYLASQLNPNGKFRISADSVSKLSRNILNEIGERVDIEIYPKLPETVFIVDTASINQLKVNFDELKEREVILIDHHKKTDLADICKYYIIKEDYPSTSEIIAEIFKELNIFPPKNVRIALLCGIVYDTKHLKLANSKTFELISYLIKDISFQKILYLLSQESDVSKRTAHLKACSRMEIREFDKLRIALSHVSSHEASCAKTIVSIGADVAFVVAVRKKEKEIRVSARCRKHVSKYVHLGNLMEKIGKELGGSGGGHSEAGGLNAPYDKSKSKEKVIKEVLNLCYKRFVEEYKKAKQN.

The tract at residues 284 to 303 (SGGGHSEAGGLNAPYDKSKS) is disordered.

This is an uncharacterized protein from Methanocaldococcus jannaschii (strain ATCC 43067 / DSM 2661 / JAL-1 / JCM 10045 / NBRC 100440) (Methanococcus jannaschii).